A 312-amino-acid chain; its full sequence is Malate dehydrogenase (312 aa).

NAD(+) is bound by residues 12-17 (GAGFTG) and Asp36. Substrate contacts are provided by Arg87 and Arg93. Residues Asn100 and 123–125 (LTN) each bind NAD(+). Asn125 serves as a coordination point for substrate. Position 149 is a phosphoserine (Ser149). Arg156 contributes to the substrate binding site. His180 (proton acceptor) is an active-site residue.

It belongs to the LDH/MDH superfamily. MDH type 3 family.

The catalysed reaction is (S)-malate + NAD(+) = oxaloacetate + NADH + H(+). In terms of biological role, catalyzes the reversible oxidation of malate to oxaloacetate. This Bacillus licheniformis (strain ATCC 14580 / DSM 13 / JCM 2505 / CCUG 7422 / NBRC 12200 / NCIMB 9375 / NCTC 10341 / NRRL NRS-1264 / Gibson 46) protein is Malate dehydrogenase.